The following is a 388-amino-acid chain: Succinate--CoA ligase [ADP-forming] subunit beta (388 aa).

One can recognise an ATP-grasp domain in the interval 9–244; sequence KELFARRGLP…VTQEDAREAH (236 aa). ATP-binding positions include Lys-46, 53-55, Glu-99, Thr-102, and Glu-107; that span reads GRG. Residues Asn-199 and Asp-213 each contribute to the Mg(2+) site. Substrate contacts are provided by residues Asn-264 and 321-323; that span reads GIV.

Belongs to the succinate/malate CoA ligase beta subunit family. Heterotetramer of two alpha and two beta subunits. Mg(2+) is required as a cofactor.

It catalyses the reaction succinate + ATP + CoA = succinyl-CoA + ADP + phosphate. The enzyme catalyses GTP + succinate + CoA = succinyl-CoA + GDP + phosphate. It functions in the pathway carbohydrate metabolism; tricarboxylic acid cycle; succinate from succinyl-CoA (ligase route): step 1/1. Its function is as follows. Succinyl-CoA synthetase functions in the citric acid cycle (TCA), coupling the hydrolysis of succinyl-CoA to the synthesis of either ATP or GTP and thus represents the only step of substrate-level phosphorylation in the TCA. The beta subunit provides nucleotide specificity of the enzyme and binds the substrate succinate, while the binding sites for coenzyme A and phosphate are found in the alpha subunit. The polypeptide is Succinate--CoA ligase [ADP-forming] subunit beta (Hamiltonella defensa subsp. Acyrthosiphon pisum (strain 5AT)).